Here is a 177-residue protein sequence, read N- to C-terminus: Putative HTH-type transcriptional regulator YvaV (177 aa).

The H-T-H motif DNA-binding region spans 49 to 73; it reads LTELSEATGMSKTRMSQVVREMLDA.

It belongs to the GbsR family.

The chain is Putative HTH-type transcriptional regulator YvaV (yvaV) from Bacillus subtilis (strain 168).